A 1166-amino-acid chain; its full sequence is Pesticidal crystal protein Cry1Ga (1166 aa).

It belongs to the delta endotoxin family.

Its function is as follows. Promotes colloidosmotic lysis by binding to the midgut epithelial cells of insects. The polypeptide is Pesticidal crystal protein Cry1Ga (cry1Ga) (Bacillus thuringiensis).